The sequence spans 227 residues: PKHD-type hydroxylase ACICU_00484 (227 aa).

A Fe2OG dioxygenase domain is found at D78 to S178. Residues H96, D98, and H159 each coordinate Fe cation. R169 contacts 2-oxoglutarate.

Requires Fe(2+) as cofactor. It depends on L-ascorbate as a cofactor.

This Acinetobacter baumannii (strain ACICU) protein is PKHD-type hydroxylase ACICU_00484.